The following is a 270-amino-acid chain: Phosphatidylglycerol--prolipoprotein diacylglyceryl transferase (270 aa).

Transmembrane regions (helical) follow at residues 19–39 (FPVY…LWLA), 56–76 (LVLI…VIFE), 92–112 (QGGL…ILFA), and 116–136 (GVSF…GQAI). An a 1,2-diacyl-sn-glycero-3-phospho-(1'-sn-glycerol)-binding site is contributed by Arg138. 3 helical membrane-spanning segments follow: residues 178–198 (HPTF…LLAL), 206–226 (GELF…VEGL), and 236–256 (LRIA…FIIV).

The protein belongs to the Lgt family.

The protein localises to the cell membrane. It carries out the reaction L-cysteinyl-[prolipoprotein] + a 1,2-diacyl-sn-glycero-3-phospho-(1'-sn-glycerol) = an S-1,2-diacyl-sn-glyceryl-L-cysteinyl-[prolipoprotein] + sn-glycerol 1-phosphate + H(+). The protein operates within protein modification; lipoprotein biosynthesis (diacylglyceryl transfer). Functionally, catalyzes the transfer of the diacylglyceryl group from phosphatidylglycerol to the sulfhydryl group of the N-terminal cysteine of a prolipoprotein, the first step in the formation of mature lipoproteins. The chain is Phosphatidylglycerol--prolipoprotein diacylglyceryl transferase from Bacillus cereus (strain G9842).